Reading from the N-terminus, the 607-residue chain is MRELRVAVLIIAVSLPSFSASDRQGDALYDMKQKLNVTGNQLSDWNQNQVNPCTWNSVICDNNNNVIQVTLAARGFAGVLSPRIGELKYLTVLSLAGNRISGGIPEQFGNLSSLTSLDLEDNLLVGEIPASLGQLSKLQLLILSDNNFNGSIPDSLAKISSLTDIRLAYNNLSGQIPGPLFQVARYNFSGNHLNCGTNFPHSCSTNMSYQSGSHSSKIGIVLGTVGGVIGLLIVAALFLFCKGRRKSHLREVFVDVAGEDDRRIAFGQLKRFAWRELQIATDNFSERNVLGQGGFGKVYKGVLPDGTKIAVKRLTDYESPGGEAAFLREVELISVAVHRNLLKLIGFCTTQTERLLVYPFMQNLSVAYRLRDFKPGEPVLNWPERKRVAIGTARGLEYLHEHCNPKIIHRDVKAANVLLDEDFEPVVGDFGLAKLVDVQKTSVTTQVRGTMGHIAPEYLSTGKSSERTDVFGYGIMLLELVTGQRAIDFSRLEEEDDVLLLDHVKKLQREGQLGSIVDRNLNQNYDDEEVEMMIQIALLCTQSSPEDRPSMSEVVRMLEGEGLAERWEEWQQVEVTRRQEYERMQRRFDWGEDSVYNQEAIELSGGR.

Positions 1–21 (MRELRVAVLIIAVSLPSFSAS) are cleaved as a signal peptide. Topologically, residues 22 to 219 (DRQGDALYDM…QSGSHSSKIG (198 aa)) are extracellular. 2 N-linked (GlcNAc...) asparagine glycosylation sites follow: Asn-36 and Asn-110. LRR repeat units lie at residues 87–110 (LKYL…QFGN), 111–135 (LSSL…LGQL), 136–159 (SKLQ…LAKI), and 160–183 (SSLT…LFQV). N-linked (GlcNAc...) asparagine glycosylation is found at Asn-149, Asn-171, Asn-187, and Asn-206. The chain crosses the membrane as a helical span at residues 220–240 (IVLGTVGGVIGLLIVAALFLF). Residues 241–607 (CKGRRKSHLR…QEAIELSGGR (367 aa)) lie on the Cytoplasmic side of the membrane. Residues 284–563 (FSERNVLGQG…VVRMLEGEGL (280 aa)) enclose the Protein kinase domain. ATP is bound by residues 290 to 298 (LGQGGFGKV) and Lys-312. Asp-411 acts as the Proton acceptor in catalysis.

The protein belongs to the protein kinase superfamily. Ser/Thr protein kinase family.

It is found in the cell membrane. It carries out the reaction L-seryl-[protein] + ATP = O-phospho-L-seryl-[protein] + ADP + H(+). The catalysed reaction is L-threonyl-[protein] + ATP = O-phospho-L-threonyl-[protein] + ADP + H(+). May be involved in the regulation of plant growth through the brassinosteroid (BR) signaling pathway. The chain is LRR receptor kinase SERK2 from Oryza sativa subsp. japonica (Rice).